The following is a 65-amino-acid chain: Large ribosomal subunit protein bL35 (65 aa).

Residues 1–15 (MPKLKTRKAAAKRFR) are compositionally biased toward basic residues. Positions 1 to 28 (MPKLKTRKAAAKRFRQTGTGKFTRRKAN) are disordered.

It belongs to the bacterial ribosomal protein bL35 family.

The chain is Large ribosomal subunit protein bL35 from Cyanothece sp. (strain PCC 7425 / ATCC 29141).